A 182-amino-acid chain; its full sequence is Ribosome-recycling factor (182 aa).

It belongs to the RRF family.

The protein localises to the cytoplasm. Its function is as follows. Responsible for the release of ribosomes from messenger RNA at the termination of protein biosynthesis. May increase the efficiency of translation by recycling ribosomes from one round of translation to another. The sequence is that of Ribosome-recycling factor from Synechococcus sp. (strain JA-2-3B'a(2-13)) (Cyanobacteria bacterium Yellowstone B-Prime).